The chain runs to 271 residues: Small ribosomal subunit protein uS2 (271 aa).

The interval 223–271 (RALAGSEEGEATEEVTPASEAEKQEVLAEAMSEEGDALQESEVVEEEEK) is disordered. Over residues 253-271 (MSEEGDALQESEVVEEEEK) the composition is skewed to acidic residues.

This sequence belongs to the universal ribosomal protein uS2 family.

This is Small ribosomal subunit protein uS2 from Wolinella succinogenes (strain ATCC 29543 / DSM 1740 / CCUG 13145 / JCM 31913 / LMG 7466 / NCTC 11488 / FDC 602W) (Vibrio succinogenes).